The chain runs to 139 residues: uncharacterized protein (139 aa).

A helical transmembrane segment spans residues 43-59 (FGVISTLIAIFIGAFWL).

The protein resides in the membrane. This is an uncharacterized protein from Haemophilus influenzae (strain ATCC 51907 / DSM 11121 / KW20 / Rd).